Consider the following 840-residue polypeptide: Lysine-specific demethylase JMJ27 (840 aa).

The segment covering 1-10 (MEKMRGKRIR) has biased composition (basic residues). The interval 1–52 (MEKMRGKRIRPRDSGELVEDGRSESERKTRKKENDVVSKGRIGRGRGRGEVS) is disordered. A compositionally biased stretch (basic and acidic residues) spans 11-38 (PRDSGELVEDGRSESERKTRKKENDVVS). Zn(2+) contacts are provided by cysteine 80, cysteine 83, cysteine 95, cysteine 98, cysteine 104, cysteine 107, cysteine 124, and cysteine 127. The RING-type; degenerate zinc-finger motif lies at 80 to 127 (CHHCKILTSESDLIFCSKCNKKCYCFDCIKRSYSERTHEEVRAACPFC). One can recognise a JmjC domain in the interval 502-798 (PKSGILNLAT…ECLRLTQEFR (297 aa)). Fe cation is bound by residues histidine 546 and aspartate 548. The segment at 594 to 678 (KEASELENKS…ETDGNTNERS (85 aa)) is disordered. Over residues 595 to 620 (EASELENKSMKEVDESKKDLKDKAAN) the composition is skewed to basic and acidic residues. Positions 621–631 (EEQSNNSSRPS) are enriched in polar residues. The span at 635–646 (EAEKVIISKEDN) shows a compositional bias: basic and acidic residues. Positions 647–659 (PTQPAVSTSVESI) are enriched in polar residues. Positions 660–678 (QEQKLDAPKETDGNTNERS) are enriched in basic and acidic residues. Histidine 766 provides a ligand contact to Fe cation.

Belongs to the JARID1 histone demethylase family. As to quaternary structure, interacts with RPN1A. Requires Fe(2+) as cofactor. Expressed in seedlings, inflorescences, flowers and siliques, and, at low levels, in roots, leaves (including vascular bundles) and stems. Particularly observed in stomatal guard cells.

The protein localises to the nucleus. Its subcellular location is the cytoplasm. The catalysed reaction is N(6),N(6)-dimethyl-L-lysyl(9)-[histone H3] + 2-oxoglutarate + O2 = N(6)-methyl-L-lysyl(9)-[histone H3] + formaldehyde + succinate + CO2. The enzyme catalyses N(6)-methyl-L-lysyl(9)-[histone H3] + 2-oxoglutarate + O2 = L-lysyl(9)-[histone H3] + formaldehyde + succinate + CO2. It carries out the reaction N(6),N(6)-dimethyl-L-lysyl(9)-[histone H3] + 2 2-oxoglutarate + 2 O2 = L-lysyl(9)-[histone H3] + 2 formaldehyde + 2 succinate + 2 CO2. Histone demethylase that demethylates 'Lys-9' (H3K9me) of histone H3 with a specific activity for H3K9me1 and H3K9me2. No activity on H3K4, H3K27, H3K36, H3R2 and H4R3 methyl marks, but weak activity on H3K9me3. Involved in regulation of gene expression. Regulates flowering time by repressing the major flowering regulator CONSTANS (CO) and promoting FLOWERING LOCUS C (FLC). Exhibits a positive impact on abscisic acid- (ABA), hydrogen peroxide- (H(2)O(2)) and calcium- (Ca(2+)) induced stomatal closure. Promotes stomatal-closure-dependent drought-stress responses through its histone demethylase activity toward at least GOLS2 and RD20 loci, thus protecting them from silencing by removing H3K9me2 marks in drought conditions. Required for plant defenses leading to resistance against the virulent bacterial pathogen Pseudomonas syringae pv. tomato DC3000 (Pst DC3000) via a negative regulation of WRKY25 (a repressor of defense) and by triggering the expression of several pathogenesis-related (PR) proteins (e.g. PR1, PR3, PR4 and PR5). The chain is Lysine-specific demethylase JMJ27 from Arabidopsis thaliana (Mouse-ear cress).